The sequence spans 300 residues: Sporulation protein SPS18 (300 aa).

In terms of domain architecture, Arf-GAP spans 11 to 130 (ENRKRLLRAK…LANEVRSNDI (120 aa)). The segment at 28–51 (CFECKSVNPQFVSCSFGIFICVNC) adopts a C4-type zinc-finger fold.

This Saccharomyces cerevisiae (strain ATCC 204508 / S288c) (Baker's yeast) protein is Sporulation protein SPS18 (SPS18).